The primary structure comprises 427 residues: UPF0229 protein YeaH (427 aa).

Over residues 79–90 (NDHFVQNDRIER) the composition is skewed to basic and acidic residues. The segment at 79–110 (NDHFVQNDRIERPQGGGGGSGSGQGQASQDGE) is disordered. Over residues 92–102 (QGGGGGSGSGQ) the composition is skewed to gly residues.

Belongs to the UPF0229 family.

The protein is UPF0229 protein YeaH of Escherichia coli (strain K12 / MC4100 / BW2952).